The following is a 457-amino-acid chain: Adenylosuccinate synthetase isozyme 2 B (457 aa).

GTP-binding positions include 40 to 46 (GDEGKGK) and 68 to 70 (GHT). Asp41 (proton acceptor) is an active-site residue. Mg(2+) contacts are provided by Asp41 and Gly68. Asp41 is a binding site for substrate. Residues 41–44 (DEGK), 66–69 (NAGH), Thr163, Arg177, Asn256, Thr271, and Arg335 contribute to the IMP site. Catalysis depends on His69, which acts as the Proton donor. 331–337 (VTTGRKR) is a binding site for substrate. GTP is bound by residues Arg337, 363-365 (KLD), and 445-448 (GVGK).

Belongs to the adenylosuccinate synthetase family. Homodimer. It depends on Mg(2+) as a cofactor.

The protein resides in the cytoplasm. Its subcellular location is the mitochondrion. It carries out the reaction IMP + L-aspartate + GTP = N(6)-(1,2-dicarboxyethyl)-AMP + GDP + phosphate + 2 H(+). Its pathway is purine metabolism; AMP biosynthesis via de novo pathway; AMP from IMP: step 1/2. With respect to regulation, inhibited competitively by AMP and IMP and non-competitively by fructose 1,6-bisphosphate. Its function is as follows. Plays an important role in the de novo pathway and in the salvage pathway of purine nucleotide biosynthesis. Catalyzes the first committed step in the biosynthesis of AMP from IMP. In Xenopus tropicalis (Western clawed frog), this protein is Adenylosuccinate synthetase isozyme 2 B (adss2-b).